A 960-amino-acid chain; its full sequence is Endosome/lysosome-associated apoptosis and autophagy regulator family member 2 (960 aa).

Residues 1–26 (MLFLRPGPARGRGRGRPARAPHSGLS) are disordered. Positions 1-44 (MLFLRPGPARGRGRGRPARAPHSGLSPPWSPAWICCWALAGCQA) are cleaved as a signal peptide. The Extracellular segment spans residues 45 to 860 (AWAGAGDLPS…TCETVDFWLK (816 aa)). N171 carries an N-linked (GlcNAc...) asparagine glycan. 3 disulfides stabilise this stretch: C295-C312, C325-C348, and C328-C360. Residues N407 and N622 are each glycosylated (N-linked (GlcNAc...) asparagine). One can recognise an MRH domain in the interval 597 to 808 (PTCPYIRSMA…LWESVEACPL (212 aa)). Disulfide bonds link C599/C651, C661/C689, C758/C794, and C770/C806. Residues 861-881 (VGAGVGAFTAVLLVALTCYFW) form a helical membrane-spanning segment. Residues 882–960 (KKNQKLEYKY…QLKSSRSPNI (79 aa)) lie on the Cytoplasmic side of the membrane. Phosphoserine is present on S949.

This sequence belongs to the ELAPOR family.

The protein localises to the cell membrane. In terms of biological role, functions as a regulator of the BMP signaling pathway and may be involved in epidermal differentiation. The sequence is that of Endosome/lysosome-associated apoptosis and autophagy regulator family member 2 from Bos taurus (Bovine).